Consider the following 634-residue polypeptide: Probable LRR receptor-like serine/threonine-protein kinase At2g23950 (634 aa).

Residues Met1–Ser27 form the signal peptide. Over Ser28 to Ala236 the chain is Extracellular. N-linked (GlcNAc...) asparagine glycosylation is found at Asn96 and Asn109. LRR repeat units follow at residues Asn99–Leu121, Lys123–Leu145, Asn147–Ser167, and His171–Thr193. Asn155 is a glycosylation site (N-linked (GlcNAc...) asparagine). The helical transmembrane segment at Val237–Trp257 threads the bilayer. Over Tyr258–Arg634 the chain is Cytoplasmic. A Phosphothreonine modification is found at Thr296. Positions Phe299–Leu554 constitute a Protein kinase domain. ATP is bound at residue Leu305–Val313. Thr322 is subject to Phosphothreonine. Lys327 is an ATP binding site. Residues Ser380 and Ser383 each carry the phosphoserine modification. Thr395 bears the Phosphothreonine mark. Asp422 serves as the catalytic Proton acceptor. A phosphothreonine mark is found at Thr455, Thr456, and Thr461. Tyr469 carries the phosphotyrosine modification. Ser471 carries the post-translational modification Phosphoserine. Residue Thr472 is modified to Phosphothreonine. Phosphoserine is present on Ser476. The residue at position 551 (Thr551) is a Phosphothreonine.

It belongs to the protein kinase superfamily. Ser/Thr protein kinase family.

The protein resides in the membrane. The catalysed reaction is L-seryl-[protein] + ATP = O-phospho-L-seryl-[protein] + ADP + H(+). The enzyme catalyses L-threonyl-[protein] + ATP = O-phospho-L-threonyl-[protein] + ADP + H(+). In Arabidopsis thaliana (Mouse-ear cress), this protein is Probable LRR receptor-like serine/threonine-protein kinase At2g23950.